A 329-amino-acid chain; its full sequence is L-carnitine dehydrogenase (329 aa).

19–24 contacts NAD(+); sequence GAGVIG.

Belongs to the 3-hydroxyacyl-CoA dehydrogenase family. L-carnitine dehydrogenase subfamily. As to quaternary structure, homodimer.

It is found in the cytoplasm. It catalyses the reaction carnitine + NAD(+) = 3-dehydrocarnitine + NADH + H(+). The protein operates within amine and polyamine metabolism; carnitine metabolism. In terms of biological role, catalyzes the NAD(+)-dependent oxidation of L-carnitine to 3-dehydrocarnitine. This is L-carnitine dehydrogenase from Nocardiopsis dassonvillei (strain ATCC 23218 / DSM 43111 / CIP 107115 / JCM 7437 / KCTC 9190 / NBRC 14626 / NCTC 10488 / NRRL B-5397 / IMRU 509) (Actinomadura dassonvillei).